Consider the following 341-residue polypeptide: Putative amino-acid ABC transporter-binding protein YhdW (341 aa).

The signal sequence occupies residues 1 to 19 (MKKMMIATLAAASVLLAVA).

The protein belongs to the bacterial solute-binding protein 3 family.

Its subcellular location is the periplasm. Its function is as follows. Probably part of the binding-protein-dependent transport system YdhWXYZ for an amino acid. The sequence is that of Putative amino-acid ABC transporter-binding protein YhdW (yhdW) from Escherichia coli O157:H7.